The sequence spans 289 residues: ATP synthase gamma chain (289 aa).

This sequence belongs to the ATPase gamma chain family. As to quaternary structure, F-type ATPases have 2 components, CF(1) - the catalytic core - and CF(0) - the membrane proton channel. CF(1) has five subunits: alpha(3), beta(3), gamma(1), delta(1), epsilon(1). CF(0) has three main subunits: a, b and c.

It localises to the cell inner membrane. In terms of biological role, produces ATP from ADP in the presence of a proton gradient across the membrane. The gamma chain is believed to be important in regulating ATPase activity and the flow of protons through the CF(0) complex. This is ATP synthase gamma chain from Cereibacter sphaeroides (strain ATCC 17023 / DSM 158 / JCM 6121 / CCUG 31486 / LMG 2827 / NBRC 12203 / NCIMB 8253 / ATH 2.4.1.) (Rhodobacter sphaeroides).